A 1060-amino-acid chain; its full sequence is RNA-binding protein 27 (1060 aa).

Disordered regions lie at residues 80–143 (PLEP…DGKW), 160–278 (YDWR…PKRR), and 319–416 (PPPG…PPPL). 2 stretches are compositionally biased toward basic and acidic residues: residues 84–102 (VKPE…KEEV) and 124–143 (SRSE…DGKW). Basic residues predominate over residues 165-185 (GRSKSRSKSRGLSRSRSRSRG). Basic and acidic residues predominate over residues 186–211 (RSKDRDPNRNVEHRERSKFKSERNDL). Composition is skewed to low complexity over residues 225–235 (SSEQYSSGAQS) and 255–268 (SWSN…SSNS). The segment at 273 to 301 (PPPKRRCRDYDERGFCVLGDLCQFDHGND) adopts a C3H1-type zinc-finger fold. Pro residues-rich tracts occupy residues 319-356 (PPPG…PGPG) and 371-384 (QPPP…PRPP). The span at 387-402 (QSSLINSRDQPGTSAV) shows a compositional bias: polar residues. At Thr-447 the chain carries Phosphothreonine. Residue Arg-455 is modified to Omega-N-methylarginine. The tract at residues 572–594 (LTKKPWLGKQGNNNQSKPGFLRK) is disordered. One can recognise an RRM domain in the interval 600 to 674 (TKLEVKKIPQ…RFIRVLWHRE (75 aa)). The tract at residues 754 to 775 (HASTNQSDTSHLLNQTGGSSGE) is disordered. Residues 755–770 (ASTNQSDTSHLLNQTG) show a composition bias toward polar residues. The stretch at 810–887 (VQEVLKKKQE…KDELKTSSTV (78 aa)) forms a coiled coil. Position 928 is a phosphoserine (Ser-928). Positions 943-982 (GRGKTISSQGRGRGRGRGRGRGSLNHMVVDHRPKALPGGG) are disordered. A phosphoserine mark is found at Ser-1012 and Ser-1020. The interval 1014-1060 (HKPKVPSISTETEEEEVKEEETETSDLFLHDDDDEDEDEYESRSWRR) is disordered. Composition is skewed to acidic residues over residues 1024 to 1037 (ETEE…ETET) and 1044 to 1053 (DDDDEDEDEY).

Its subcellular location is the cytoplasm. It is found in the nucleus speckle. Its function is as follows. May be involved in the turnover of nuclear polyadenylated (pA+) RNA. The sequence is that of RNA-binding protein 27 from Mus musculus (Mouse).